The following is a 182-amino-acid chain: Isopentenyl-diphosphate Delta-isomerase (182 aa).

Mn(2+) contacts are provided by histidine 23 and histidine 30. In terms of domain architecture, Nudix hydrolase spans 28 to 162 (PRHLAFSCHV…PWAFSPWLVE (135 aa)). Cysteine 65 is an active-site residue. Residue cysteine 65 coordinates Mg(2+). A Mn(2+)-binding site is contributed by histidine 67. Mg(2+) is bound at residue glutamate 85. The Mn(2+) site is built by glutamate 112 and glutamate 114. Glutamate 114 is a catalytic residue.

It belongs to the IPP isomerase type 1 family. It depends on Mg(2+) as a cofactor. The cofactor is Mn(2+).

Its subcellular location is the cytoplasm. It carries out the reaction isopentenyl diphosphate = dimethylallyl diphosphate. It participates in isoprenoid biosynthesis; dimethylallyl diphosphate biosynthesis; dimethylallyl diphosphate from isopentenyl diphosphate: step 1/1. Catalyzes the 1,3-allylic rearrangement of the homoallylic substrate isopentenyl (IPP) to its highly electrophilic allylic isomer, dimethylallyl diphosphate (DMAPP). The chain is Isopentenyl-diphosphate Delta-isomerase from Brevibacterium linens.